The sequence spans 83 residues: Retinal cone rhodopsin-sensitive cGMP 3',5'-cyclic phosphodiesterase subunit gamma (83 aa).

The span at 1–19 (MSDNTTLAPPAASQAPATP) shows a compositional bias: low complexity. The tract at residues 1–51 (MSDNTTLAPPAASQAPATPRKGPPKFKQRQTRQFKSKPPKKGVKGFGDDIP) is disordered. Residues 22–43 (GPPKFKQRQTRQFKSKPPKKGV) are compositionally biased toward basic residues.

This sequence belongs to the rod/cone cGMP-PDE gamma subunit family. As to quaternary structure, tetramer composed of two catalytic chains (alpha and beta), and two inhibitory chains (gamma).

The catalysed reaction is 3',5'-cyclic GMP + H2O = GMP + H(+). Participates in processes of transmission and amplification of the visual signal. cGMP-PDEs are the effector molecules in G-protein-mediated phototransduction in vertebrate rods and cones. In Ictidomys tridecemlineatus (Thirteen-lined ground squirrel), this protein is Retinal cone rhodopsin-sensitive cGMP 3',5'-cyclic phosphodiesterase subunit gamma (PDE6H).